The sequence spans 216 residues: ATP synthase subunit a (216 aa).

Transmembrane regions (helical) follow at residues 1–21, 62–82, 88–108, 119–139, 149–169, 174–194, and 196–216; these read MEYSHVVYALLAVALAIIFVL, LIAAIGLFVFFGNILGMVPGF, NINTNLALALLVFFYYHFEGF, FMGPIPLMAPFFFVVEVISHI, LFANMKAGALLLLTLVSLVIK, LVVSPVVLIFVIAIKFLAIFI, and TYIFMILSVVYIAGAVAHEEH.

The protein belongs to the ATPase A chain family. In terms of assembly, F-type ATPases have 2 components, CF(1) - the catalytic core - and CF(0) - the membrane proton channel. CF(1) has five subunits: alpha(3), beta(3), gamma(1), delta(1), epsilon(1). CF(0) has three main subunits: a(1), b(2) and c(9-12). The alpha and beta chains form an alternating ring which encloses part of the gamma chain. CF(1) is attached to CF(0) by a central stalk formed by the gamma and epsilon chains, while a peripheral stalk is formed by the delta and b chains.

It is found in the cell inner membrane. In terms of biological role, key component of the proton channel; it plays a direct role in the translocation of protons across the membrane. The sequence is that of ATP synthase subunit a from Aquifex aeolicus (strain VF5).